A 491-amino-acid chain; its full sequence is Ketol-acid reductoisomerase (NADP(+)) (491 aa).

In terms of domain architecture, KARI N-terminal Rossmann spans 15-208; it reads AQLGKCRFMG…GGHRAGVLES (194 aa). Residues 45–48, R68, R76, S78, and 108–110 contribute to the NADP(+) site; these read CGAQ and DKQ. Residue H132 is part of the active site. Residue G158 participates in NADP(+) binding. KARI C-terminal knotted domains are found at residues 209-344 and 345-484; these read SFVA…TAPQ and YEGK…MTDM. Positions 217, 221, 389, and 393 each coordinate Mg(2+). Residue S414 participates in substrate binding.

This sequence belongs to the ketol-acid reductoisomerase family. Requires Mg(2+) as cofactor.

The enzyme catalyses (2R)-2,3-dihydroxy-3-methylbutanoate + NADP(+) = (2S)-2-acetolactate + NADPH + H(+). It catalyses the reaction (2R,3R)-2,3-dihydroxy-3-methylpentanoate + NADP(+) = (S)-2-ethyl-2-hydroxy-3-oxobutanoate + NADPH + H(+). Its pathway is amino-acid biosynthesis; L-isoleucine biosynthesis; L-isoleucine from 2-oxobutanoate: step 2/4. It functions in the pathway amino-acid biosynthesis; L-valine biosynthesis; L-valine from pyruvate: step 2/4. Functionally, involved in the biosynthesis of branched-chain amino acids (BCAA). Catalyzes an alkyl-migration followed by a ketol-acid reduction of (S)-2-acetolactate (S2AL) to yield (R)-2,3-dihydroxy-isovalerate. In the isomerase reaction, S2AL is rearranged via a Mg-dependent methyl migration to produce 3-hydroxy-3-methyl-2-ketobutyrate (HMKB). In the reductase reaction, this 2-ketoacid undergoes a metal-dependent reduction by NADPH to yield (R)-2,3-dihydroxy-isovalerate. This chain is Ketol-acid reductoisomerase (NADP(+)), found in Escherichia coli O8 (strain IAI1).